Consider the following 738-residue polypeptide: MTSSGPGPRFLLLLPLLLPPAASASDRPRGRDPVNPEKLLVITVATAETEGYLRFLRSAEFFNYTVRTLGLGEEWRGGDVARTVGGGQKVRWLKKEMEKYADREDMIIMFVDSYDVILAGSPTELLKKFVQSGSRLLFSAESFCWPEWGLAEQYPEVGTGKRFLNSGGFIGFATTIHQIVRQWKYKDDDDDQLFYTRLYLDPGLREKLSLNLDHKSRIFQNLNGALDEVVLKFDRNRVRIRNVAYDTLPVVVHGNGPTKLQLNYLGNYVPKGWTPEGGCGFCNQDRRTLPGGQPPPRVFLAVFVEQPTPFLPRFLQRLLLLDYPPDRVTLFLHNNEVFHEPHIADSWPQLQDHFSAVKLVGPEEALSPGEARDMAMDLCRQDPECEFYFSLDADTVLTNLQTLRILIEENRKVIAPMLSRHGKLWSNFWGALSPDEYYARSEDYVELVQRKRVGVWNVPYISQAYVIRGDTLRTELPQRDVFSGSDTDPDMAFCKSFRDKGIFLHLSNQHEFGRLLATSRYDTEHLHPDLWQIFDNPVDWKEQYIHENYSRALEGEGIVEQPCPDVYWFPLLSEQMCDELVAEMEHYGQWSGGRHEDSRLAGGYENVPTVDIHMKQVGYEDQWLQLLRTYVGPMTESLFPGYHTKARAVMNFVVRYRPDEQPSLRPHHDSSTFTLNVALNHKGLDYEGGGCRFLRYDCVISSPRKGWALLHPGRLTHYHEGLPTTWGTRYIMVSFVDP.

Positions 1–24 (MTSSGPGPRFLLLLPLLLPPAASA) are cleaved as a signal peptide. Positions 25–290 (SDRPRGRDPV…FCNQDRRTLP (266 aa)) are required for glycosyltransferase activity. UDP is bound at residue 44–46 (VAT). A glycan (N-linked (GlcNAc...) asparagine) is linked at Asn63. Asp112, Asp115, and His253 together coordinate Mn(2+). 112-114 (DSY) provides a ligand contact to UDP. A UDP-binding site is contributed by 256–259 (GPTK). Intrachain disulfides connect Cys279–Cys282 and Cys379–Cys385. The tract at residues 295–520 (PPRVFLAVFV…EFGRLLATSR (226 aa)) is accessory region. A glycan (N-linked (GlcNAc...) asparagine) is linked at Asn548. Cys563 and Cys698 are joined by a disulfide. 2-oxoglutarate-binding residues include Arg599 and Tyr656. Residues 647-738 (RAVMNFVVRY…RYIMVSFVDP (92 aa)) enclose the Fe2OG dioxygenase domain. Positions 667 and 669 each coordinate Fe cation. The tract at residues 672-715 (TFTLNVALNHKGLDYEGGGCRFLRYDCVISSPRKGWALLHPGRL) is important for dimerization. Asn676 contacts 2-oxoglutarate. His719 provides a ligand contact to Fe cation. 2-oxoglutarate is bound at residue Arg729.

As to quaternary structure, homodimer. The cofactor is Fe(2+). Requires L-ascorbate as cofactor. Mn(2+) is required as a cofactor.

The protein resides in the rough endoplasmic reticulum. Its subcellular location is the endoplasmic reticulum lumen. The protein localises to the endoplasmic reticulum membrane. It is found in the secreted. It localises to the extracellular space. The enzyme catalyses L-lysyl-[collagen] + 2-oxoglutarate + O2 = (5R)-5-hydroxy-L-lysyl-[collagen] + succinate + CO2. The catalysed reaction is (5R)-5-hydroxy-L-lysyl-[collagen] + UDP-alpha-D-galactose = (5R)-5-O-(beta-D-galactosyl)-5-hydroxy-L-lysyl-[collagen] + UDP + H(+). It carries out the reaction (5R)-5-O-(beta-D-galactosyl)-5-hydroxy-L-lysyl-[collagen] + UDP-alpha-D-glucose = (5R)-5-O-[alpha-D-glucosyl-(1-&gt;2)-beta-D-galactosyl]-5-hydroxy-L-lysyl-[collagen] + UDP + H(+). Multifunctional enzyme that catalyzes a series of post-translational modifications on Lys residues in procollagen. Plays a redundant role in catalyzing the formation of hydroxylysine residues in -Xaa-Lys-Gly- sequences in collagens. Plays a redundant role in catalyzing the transfer of galactose onto hydroxylysine groups, giving rise to galactosyl 5-hydroxylysine. Has an essential role by catalyzing the subsequent transfer of glucose moieties, giving rise to 1,2-glucosylgalactosyl-5-hydroxylysine residues. Catalyzes hydroxylation and glycosylation of Lys residues in the MBL1 collagen-like domain, giving rise to hydroxylysine and 1,2-glucosylgalactosyl-5-hydroxylysine residues. Catalyzes hydroxylation and glycosylation of Lys residues in the ADIPOQ collagen-like domain, giving rise to hydroxylysine and 1,2-glucosylgalactosyl-5-hydroxylysine residues. Essential for normal biosynthesis and secretion of type IV collagens. Essential for normal formation of basement membranes. The protein is Multifunctional procollagen lysine hydroxylase and glycosyltransferase LH3 (PLOD3) of Pongo abelii (Sumatran orangutan).